Reading from the N-terminus, the 347-residue chain is NADH-ubiquinone oxidoreductase chain 2 (347 aa).

10 helical membrane-spanning segments follow: residues 13–33, 55–75, 96–116, 123–143, 149–169, 178–198, 201–221, 247–267, 274–294, and 326–346; these read IFAGTFITVLSSHWFFTWVGL, AAIKYFLTQATASMILLMAIL, LMIMTAMAMKLGMAPFHFWVP, PLMSGLLLLTWQKLAPISIMY, LNVNLLLTLSILSIMAGSWGG, ILAYSSITHMGWMMAVLPYNP, TILNLTIYIILTTTTFLLLNL, TLLSLGGLPPLTGFLPKWVII, NSLIIPTTMAIITLLNLYFYL, and LPTLITLTTLLLPISPFMLMI.

This sequence belongs to the complex I subunit 2 family. In terms of assembly, core subunit of respiratory chain NADH dehydrogenase (Complex I) which is composed of 45 different subunits. Interacts with TMEM242.

It localises to the mitochondrion inner membrane. The enzyme catalyses a ubiquinone + NADH + 5 H(+)(in) = a ubiquinol + NAD(+) + 4 H(+)(out). Its function is as follows. Core subunit of the mitochondrial membrane respiratory chain NADH dehydrogenase (Complex I) which catalyzes electron transfer from NADH through the respiratory chain, using ubiquinone as an electron acceptor. Essential for the catalytic activity and assembly of complex I. The protein is NADH-ubiquinone oxidoreductase chain 2 of Pan paniscus (Pygmy chimpanzee).